The primary structure comprises 104 residues: Large ribosomal subunit protein bL21 (104 aa).

It belongs to the bacterial ribosomal protein bL21 family. As to quaternary structure, part of the 50S ribosomal subunit. Contacts protein L20.

This protein binds to 23S rRNA in the presence of protein L20. This Tropheryma whipplei (strain TW08/27) (Whipple's bacillus) protein is Large ribosomal subunit protein bL21.